Here is a 74-residue protein sequence, read N- to C-terminus: Beta-defensin 39 (74 aa).

The N-terminal stretch at 1–23 is a signal peptide; sequence MKISYFLLLILSLGSSQINPVSG. 3 cysteine pairs are disulfide-bonded: Cys29–Cys58, Cys36–Cys51, and Cys41–Cys59.

The protein belongs to the beta-defensin family. Only expressed in epididymis (caput, corpus and cauda).

It is found in the secreted. Its function is as follows. Has antibacterial activity. The sequence is that of Beta-defensin 39 (Defb39) from Mus musculus (Mouse).